A 120-amino-acid chain; its full sequence is Large ribosomal subunit protein bL17 (120 aa).

It belongs to the bacterial ribosomal protein bL17 family. Part of the 50S ribosomal subunit. Contacts protein L32.

This chain is Large ribosomal subunit protein bL17, found in Geobacillus thermodenitrificans (strain NG80-2).